Here is a 506-residue protein sequence, read N- to C-terminus: Lysine--tRNA ligase (506 aa).

Positions 416 and 423 each coordinate Mg(2+).

It belongs to the class-II aminoacyl-tRNA synthetase family. Homodimer. Mg(2+) serves as cofactor.

The protein localises to the cytoplasm. It catalyses the reaction tRNA(Lys) + L-lysine + ATP = L-lysyl-tRNA(Lys) + AMP + diphosphate. The chain is Lysine--tRNA ligase from Sodalis glossinidius (strain morsitans).